Reading from the N-terminus, the 931-residue chain is Short transient receptor potential channel 6 (931 aa).

The disordered stretch occupies residues 1–24 (MNQSPAAFGPRRGGSPAVVAGAGA). Topologically, residues 1–406 (MNQSPAAFGP…GLRQQTMAVK (406 aa)) are cytoplasmic. The segment covering 13–24 (GGSPAVVAGAGA) has biased composition (low complexity). ANK repeat units lie at residues 131-160 (MGQNALQLAVANEHLEITELLLKKENLSRV), 162-188 (DALLLAISKGYVRIVEAILSHPAFAEG), and 217-246 (HDVTPIILAAHCQEYEIVHTLLRKGARIER). The chain crosses the membrane as a helical span at residues 407-427 (FLVVLAVAVGLPFLALVYWFA). Residues 428–438 (PCSKMGKIMRG) lie on the Extracellular side of the membrane. A helical membrane pass occupies residues 439–459 (PFMKFVAHAASFTIFLGLLVM). At 460 to 487 (NAADRFEGTKILPNETSTDHAKQLFRMK) the chain is on the cytoplasmic side. Residues 488-508 (TSCFSWMEMLIISWVIGMIWA) form a helical membrane-spanning segment. The Extracellular segment spans residues 509–521 (ECKEIWTQGPKEY). Residues 522–542 (LFELWNMLDFGMLAIFAASFI) traverse the membrane as a helical segment. Over 543–592 (ARFMAFWHASKAQSIIDANDTLKDLTKVTLGDNVKYYNLARIKWDPSDPQ) the chain is Cytoplasmic. Residues 593–613 (IISEGLYAIAVVLSFSRIAYI) traverse the membrane as a helical segment. Topologically, residues 614–636 (LPANESFGPLQISLGRTVKDIFK) are extracellular. Residue Asn-617 is glycosylated (N-linked (GlcNAc...) asparagine). The stretch at 618 to 647 (ESFGPLQISLGRTVKDIFKFMVIFIMVFVA) is one ANK 4 repeat. Residues 637–657 (FMVIFIMVFVAFMIGMFNLYS) traverse the membrane as a helical segment. The Cytoplasmic segment spans residues 658–674 (YYIGAKQNEAFTTVEES). Residues 675 to 695 (FKTLFWAIFGLSEVKSVVINY) form a helical membrane-spanning segment. At 696-706 (NHKFIENIGYV) the chain is on the extracellular side. The helical transmembrane segment at 707-727 (LYGVYNVTMVIVLLNMLIAMI) threads the bilayer. Residues 728–931 (NSSFQEIEDD…MEPNQEESNR (204 aa)) lie on the Cytoplasmic side of the membrane. Phosphoserine is present on Ser-815.

This sequence belongs to the transient receptor (TC 1.A.4) family. STrpC subfamily. TRPC6 sub-subfamily. In terms of assembly, homodimer; forms channel complex. Interacts with MX1 and RNF24. Phosphorylated by FYN, leading to an increase of TRPC6 channel activity.

The protein localises to the cell membrane. The enzyme catalyses Ca(2+)(in) = Ca(2+)(out). Thought to form a receptor-activated non-selective calcium permeant cation channel. Probably is operated by a phosphatidylinositol second messenger system activated by receptor tyrosine kinases or G-protein coupled receptors. Activated by diacylglycerol (DAG) in a membrane-delimited fashion, independently of protein kinase C. Seems not to be activated by intracellular calcium store depletion. The sequence is that of Short transient receptor potential channel 6 from Bos taurus (Bovine).